The following is a 456-amino-acid chain: MSNSSMSVVILAAGKGTRMYSDLPKVLHPLAGKPMVQHVIDAAMKLGAQQVHLVYGHGGELLQKTLTDPALNWVLQAEQLGTGHAMQQAAPHFADDEDVLMLYGDVPLISVDTLQRLLAAKPQGGIGLLTVKLDNPSGYGRIVRENGDVVGIVEHKDASDTQREINEINTGILVANGRDLKRWLSLLNNNNAQGEFYITDIIALAHADGKKIATVHPARLSEVEGVNNRLQLAALERVYQSEQAEKLLLAGVMLLDPARFDLRGELTHGRDITIDTNVIIEGHVTLGDRVRIGTGCVLKNCVIGDDSEISPYSVLEDSRLDAGCTVGPFARLRPGAELAEGAHVGNFVEIKKARLGKGSKAGHLSYLGDAEIGSGVNIGAGTITCNYDGANKFKTIIGDDVFVGSDTQLVAPVTVANGATIAAGTTVTRDIAENELVLSRVKQVHVQGWQRPIKKK.

The tract at residues 1–229 is pyrophosphorylase; sequence MSNSSMSVVI…LSEVEGVNNR (229 aa). Residues 11 to 14, lysine 25, glutamine 76, 81 to 82, 103 to 105, glycine 140, glutamate 154, asparagine 169, and asparagine 227 contribute to the UDP-N-acetyl-alpha-D-glucosamine site; these read LAAG, GT, and YGD. Mg(2+) is bound at residue aspartate 105. Asparagine 227 is a Mg(2+) binding site. The tract at residues 230–250 is linker; that stretch reads LQLAALERVYQSEQAEKLLLA. The tract at residues 251–456 is N-acetyltransferase; the sequence is GVMLLDPARF…QGWQRPIKKK (206 aa). 2 residues coordinate UDP-N-acetyl-alpha-D-glucosamine: arginine 333 and lysine 351. The Proton acceptor role is filled by histidine 363. Residues tyrosine 366 and asparagine 377 each contribute to the UDP-N-acetyl-alpha-D-glucosamine site. Residues alanine 380, 386-387, serine 405, alanine 423, and arginine 440 contribute to the acetyl-CoA site; that span reads NY.

It in the N-terminal section; belongs to the N-acetylglucosamine-1-phosphate uridyltransferase family. In the C-terminal section; belongs to the transferase hexapeptide repeat family. In terms of assembly, homotrimer. Mg(2+) serves as cofactor.

The protein localises to the cytoplasm. The enzyme catalyses alpha-D-glucosamine 1-phosphate + acetyl-CoA = N-acetyl-alpha-D-glucosamine 1-phosphate + CoA + H(+). It carries out the reaction N-acetyl-alpha-D-glucosamine 1-phosphate + UTP + H(+) = UDP-N-acetyl-alpha-D-glucosamine + diphosphate. Its pathway is nucleotide-sugar biosynthesis; UDP-N-acetyl-alpha-D-glucosamine biosynthesis; N-acetyl-alpha-D-glucosamine 1-phosphate from alpha-D-glucosamine 6-phosphate (route II): step 2/2. It functions in the pathway nucleotide-sugar biosynthesis; UDP-N-acetyl-alpha-D-glucosamine biosynthesis; UDP-N-acetyl-alpha-D-glucosamine from N-acetyl-alpha-D-glucosamine 1-phosphate: step 1/1. The protein operates within bacterial outer membrane biogenesis; LPS lipid A biosynthesis. Functionally, catalyzes the last two sequential reactions in the de novo biosynthetic pathway for UDP-N-acetylglucosamine (UDP-GlcNAc). The C-terminal domain catalyzes the transfer of acetyl group from acetyl coenzyme A to glucosamine-1-phosphate (GlcN-1-P) to produce N-acetylglucosamine-1-phosphate (GlcNAc-1-P), which is converted into UDP-GlcNAc by the transfer of uridine 5-monophosphate (from uridine 5-triphosphate), a reaction catalyzed by the N-terminal domain. The polypeptide is Bifunctional protein GlmU (Yersinia enterocolitica serotype O:8 / biotype 1B (strain NCTC 13174 / 8081)).